The chain runs to 157 residues: uncharacterized protein (157 aa).

Residues 9 to 154 (LLINYKTLDE…ETNSNAITNE (146 aa)) enclose the N-acetyltransferase domain.

This is an uncharacterized protein from Bacillus mycoides (strain KBAB4) (Bacillus weihenstephanensis).